The sequence spans 381 residues: Queuine tRNA-ribosyltransferase (381 aa).

Residue D103 is the Proton acceptor of the active site. Residues 103-107, D157, Q200, and G227 each bind substrate; that span reads DSGGF. The RNA binding stretch occupies residues 258-264; the sequence is GVGTYRE. The Nucleophile role is filled by D277. The tract at residues 282-286 is RNA binding; important for wobble base 34 recognition; sequence TRLAR. 4 residues coordinate Zn(2+): C315, C317, C320, and H346.

It belongs to the queuine tRNA-ribosyltransferase family. As to quaternary structure, homodimer. Within each dimer, one monomer is responsible for RNA recognition and catalysis, while the other monomer binds to the replacement base PreQ1. The cofactor is Zn(2+).

The enzyme catalyses 7-aminomethyl-7-carbaguanine + guanosine(34) in tRNA = 7-aminomethyl-7-carbaguanosine(34) in tRNA + guanine. The protein operates within tRNA modification; tRNA-queuosine biosynthesis. In terms of biological role, catalyzes the base-exchange of a guanine (G) residue with the queuine precursor 7-aminomethyl-7-deazaguanine (PreQ1) at position 34 (anticodon wobble position) in tRNAs with GU(N) anticodons (tRNA-Asp, -Asn, -His and -Tyr). Catalysis occurs through a double-displacement mechanism. The nucleophile active site attacks the C1' of nucleotide 34 to detach the guanine base from the RNA, forming a covalent enzyme-RNA intermediate. The proton acceptor active site deprotonates the incoming PreQ1, allowing a nucleophilic attack on the C1' of the ribose to form the product. After dissociation, two additional enzymatic reactions on the tRNA convert PreQ1 to queuine (Q), resulting in the hypermodified nucleoside queuosine (7-(((4,5-cis-dihydroxy-2-cyclopenten-1-yl)amino)methyl)-7-deazaguanosine). The chain is Queuine tRNA-ribosyltransferase from Cyanothece sp. (strain PCC 7425 / ATCC 29141).